Here is a 70-residue protein sequence, read N- to C-terminus: Bowman-Birk type proteinase inhibitor A-II (70 aa).

Intrachain disulfides connect cysteine 11/cysteine 68, cysteine 12/cysteine 29, cysteine 15/cysteine 63, cysteine 17/cysteine 27, cysteine 36/cysteine 43, cysteine 40/cysteine 55, and cysteine 45/cysteine 53.

Belongs to the Bowman-Birk serine protease inhibitor family.

Its function is as follows. These proteins inhibit trypsin and chymotrypsin, having 2 sites of interaction with trypsin. The site of interaction with chymotrypsin has not been determined but is not independent of the trypsin-reactive sites. This chain is Bowman-Birk type proteinase inhibitor A-II, found in Arachis hypogaea (Peanut).